Consider the following 341-residue polypeptide: MRPILLSGHERALTQVKFNPDGDLIFSVAKDQHICVWFAHNGERLGTYHGHQGAIWTVDCDPTSTIIATGSADNTIKLWEIKTGRCLHTWEFPTAVKRVEFSPDGTRLLGVTEKRMGHLGTIVVLDVKLDVDAEQNPERAMTIVCDESKATVAGWSYLAKYIIAGHEDGSVSQYDAKNGDQLHSVQIHDMGSEIRDLQWSQDRTYFITASKDKTAKLVTARDLEVLKTYPADTPLNSAVITPKKDYVILGGGQAAMDVTTTSARQGKFEARFYHKIFEDEIGRVRGHFGPLNYVAAEPNGKGYASGGEDGYVRVHQFDKGYFDFMYEVERERKNKMEQAQQ.

WD repeat units follow at residues 8-49, 50-91, 145-184, 189-228, and 286-325; these read GHER…GTYH, GHQG…HTWE, CDES…QLHS, DMGS…VLKT, and GHFG…FDFM.

It belongs to the eIF-3 subunit I family. Component of the eukaryotic translation initiation factor 3 (eIF-3) complex.

It is found in the cytoplasm. In terms of biological role, component of the eukaryotic translation initiation factor 3 (eIF-3) complex, which is involved in protein synthesis of a specialized repertoire of mRNAs and, together with other initiation factors, stimulates binding of mRNA and methionyl-tRNAi to the 40S ribosome. The eIF-3 complex specifically targets and initiates translation of a subset of mRNAs involved in cell proliferation. This chain is Eukaryotic translation initiation factor 3 subunit I, found in Pyricularia oryzae (strain 70-15 / ATCC MYA-4617 / FGSC 8958) (Rice blast fungus).